Consider the following 169-residue polypeptide: NADH-quinone oxidoreductase subunit I (169 aa).

2 4Fe-4S ferredoxin-type domains span residues 61 to 90 and 100 to 129; these read RKYKNGEERCIACKLCEAICPAQAITIEAQ and VRYDIDMTKCIYCGFCQEACPVDAIVEGPN. Cysteine 70, cysteine 73, cysteine 76, cysteine 80, cysteine 109, cysteine 112, cysteine 115, and cysteine 119 together coordinate [4Fe-4S] cluster.

Belongs to the complex I 23 kDa subunit family. NDH-1 is composed of 14 different subunits. Subunits NuoA, H, J, K, L, M, N constitute the membrane sector of the complex. [4Fe-4S] cluster serves as cofactor.

The protein localises to the cell inner membrane. It carries out the reaction a quinone + NADH + 5 H(+)(in) = a quinol + NAD(+) + 4 H(+)(out). NDH-1 shuttles electrons from NADH, via FMN and iron-sulfur (Fe-S) centers, to quinones in the respiratory chain. The immediate electron acceptor for the enzyme in this species is believed to be ubiquinone. Couples the redox reaction to proton translocation (for every two electrons transferred, four hydrogen ions are translocated across the cytoplasmic membrane), and thus conserves the redox energy in a proton gradient. The chain is NADH-quinone oxidoreductase subunit I from Ehrlichia chaffeensis (strain ATCC CRL-10679 / Arkansas).